Reading from the N-terminus, the 268-residue chain is Tryptophan synthase alpha chain (268 aa).

Catalysis depends on proton acceptor residues Glu-49 and Asp-60.

The protein belongs to the TrpA family. As to quaternary structure, tetramer of two alpha and two beta chains.

It carries out the reaction (1S,2R)-1-C-(indol-3-yl)glycerol 3-phosphate + L-serine = D-glyceraldehyde 3-phosphate + L-tryptophan + H2O. The protein operates within amino-acid biosynthesis; L-tryptophan biosynthesis; L-tryptophan from chorismate: step 5/5. In terms of biological role, the alpha subunit is responsible for the aldol cleavage of indoleglycerol phosphate to indole and glyceraldehyde 3-phosphate. This Pseudomonas aeruginosa (strain ATCC 15692 / DSM 22644 / CIP 104116 / JCM 14847 / LMG 12228 / 1C / PRS 101 / PAO1) protein is Tryptophan synthase alpha chain.